A 515-amino-acid chain; its full sequence is Protein nucleotidyltransferase YdiU (515 aa).

ATP is bound by residues G101, G103, R104, K124, D136, G137, R194, and R201. D269 serves as the catalytic Proton acceptor. The Mg(2+) site is built by N270 and D279. D279 contributes to the ATP binding site.

This sequence belongs to the SELO family. Requires Mg(2+) as cofactor. Mn(2+) is required as a cofactor.

The enzyme catalyses L-seryl-[protein] + ATP = 3-O-(5'-adenylyl)-L-seryl-[protein] + diphosphate. The catalysed reaction is L-threonyl-[protein] + ATP = 3-O-(5'-adenylyl)-L-threonyl-[protein] + diphosphate. It carries out the reaction L-tyrosyl-[protein] + ATP = O-(5'-adenylyl)-L-tyrosyl-[protein] + diphosphate. It catalyses the reaction L-histidyl-[protein] + UTP = N(tele)-(5'-uridylyl)-L-histidyl-[protein] + diphosphate. The enzyme catalyses L-seryl-[protein] + UTP = O-(5'-uridylyl)-L-seryl-[protein] + diphosphate. The catalysed reaction is L-tyrosyl-[protein] + UTP = O-(5'-uridylyl)-L-tyrosyl-[protein] + diphosphate. Functionally, nucleotidyltransferase involved in the post-translational modification of proteins. It can catalyze the addition of adenosine monophosphate (AMP) or uridine monophosphate (UMP) to a protein, resulting in modifications known as AMPylation and UMPylation. The polypeptide is Protein nucleotidyltransferase YdiU (Cytophaga hutchinsonii (strain ATCC 33406 / DSM 1761 / CIP 103989 / NBRC 15051 / NCIMB 9469 / D465)).